Reading from the N-terminus, the 93-residue chain is 3-isopropylmalate dehydratase small subunit (93 aa).

The protein belongs to the LeuD family. LeuD type 1 subfamily. Heterodimer of LeuC and LeuD.

It catalyses the reaction (2R,3S)-3-isopropylmalate = (2S)-2-isopropylmalate. It participates in amino-acid biosynthesis; L-leucine biosynthesis; L-leucine from 3-methyl-2-oxobutanoate: step 2/4. In terms of biological role, catalyzes the isomerization between 2-isopropylmalate and 3-isopropylmalate, via the formation of 2-isopropylmaleate. This Actinoplanes teichomyceticus protein is 3-isopropylmalate dehydratase small subunit (leuD).